The chain runs to 332 residues: Glycerol-3-phosphate dehydrogenase [NAD(P)+] (332 aa).

Ser-11, Phe-12, Lys-32, and Lys-106 together coordinate NADPH. Lys-106, Gly-137, and Ser-139 together coordinate sn-glycerol 3-phosphate. Ala-141 lines the NADPH pocket. Residues Lys-192, Asp-245, Ser-255, Arg-256, and Asn-257 each contribute to the sn-glycerol 3-phosphate site. Lys-192 functions as the Proton acceptor in the catalytic mechanism. An NADPH-binding site is contributed by Arg-256. Residues Val-280 and Glu-282 each contribute to the NADPH site.

It belongs to the NAD-dependent glycerol-3-phosphate dehydrogenase family.

The protein localises to the cytoplasm. The catalysed reaction is sn-glycerol 3-phosphate + NAD(+) = dihydroxyacetone phosphate + NADH + H(+). The enzyme catalyses sn-glycerol 3-phosphate + NADP(+) = dihydroxyacetone phosphate + NADPH + H(+). It participates in membrane lipid metabolism; glycerophospholipid metabolism. Functionally, catalyzes the reduction of the glycolytic intermediate dihydroxyacetone phosphate (DHAP) to sn-glycerol 3-phosphate (G3P), the key precursor for phospholipid synthesis. This chain is Glycerol-3-phosphate dehydrogenase [NAD(P)+], found in Staphylococcus haemolyticus (strain JCSC1435).